Here is a 162-residue protein sequence, read N- to C-terminus: Caveolin-2 (162 aa).

Residues 1-86 (MGLETEKADV…FEISKYVMYK (86 aa)) are Cytoplasmic-facing. Tyr-19 is subject to Phosphotyrosine. Residues Ser-20 and Ser-36 each carry the phosphoserine modification. Positions 87-107 (FLTVFLAIPLAFVAGILFATL) form an intramembrane region, helical. Topologically, residues 108–162 (SCLHIWIIMPFVKTCLMVLPSVQTIWKSVTDVIIAPLCTSVGRSFSSISLQLSHD) are cytoplasmic.

It belongs to the caveolin family. As to quaternary structure, homodimer. Caveolin-1 and -2 colocalize and form a stable hetero-oligomeric complex.

Its subcellular location is the golgi apparatus membrane. It localises to the cell membrane. It is found in the membrane. The protein resides in the caveola. Its function is as follows. May act as a scaffolding protein within caveolar membranes. Interacts directly with G-protein alpha subunits and can functionally regulate their activity. Caveolin-2 may function as an accessory protein in conjunction with caveolin-1. The chain is Caveolin-2 (CAV2) from Microcebus murinus (Gray mouse lemur).